Here is a 154-residue protein sequence, read N- to C-terminus: Transcriptional repressor NrdR (154 aa).

The segment at 1–22 (MRCPFCGNDDTQVKDSRPTEDN) is disordered. A zinc finger spans residues 3–34 (CPFCGNDDTQVKDSRPTEDNSAIRRRRFCPAC). The span at 11–22 (TQVKDSRPTEDN) shows a compositional bias: basic and acidic residues. Residues 49–139 (LTVVKSGGSR…VYKDFREVTD (91 aa)) enclose the ATP-cone domain.

This sequence belongs to the NrdR family. It depends on Zn(2+) as a cofactor.

Its function is as follows. Negatively regulates transcription of bacterial ribonucleotide reductase nrd genes and operons by binding to NrdR-boxes. This is Transcriptional repressor NrdR from Rhodospirillum centenum (strain ATCC 51521 / SW).